The sequence spans 194 residues: Imidazoleglycerol-phosphate dehydratase (194 aa).

Belongs to the imidazoleglycerol-phosphate dehydratase family.

It is found in the cytoplasm. It catalyses the reaction D-erythro-1-(imidazol-4-yl)glycerol 3-phosphate = 3-(imidazol-4-yl)-2-oxopropyl phosphate + H2O. Its pathway is amino-acid biosynthesis; L-histidine biosynthesis; L-histidine from 5-phospho-alpha-D-ribose 1-diphosphate: step 6/9. The chain is Imidazoleglycerol-phosphate dehydratase from Bacillus cereus (strain ATCC 14579 / DSM 31 / CCUG 7414 / JCM 2152 / NBRC 15305 / NCIMB 9373 / NCTC 2599 / NRRL B-3711).